Reading from the N-terminus, the 292-residue chain is Diaminopimelate epimerase (292 aa).

Residues Asn-13, Gln-46, and Asn-66 each contribute to the substrate site. Cys-75 functions as the Proton donor in the catalytic mechanism. Residues 76–77 (GN), Asn-166, Asn-199, and 217–218 (ER) contribute to the substrate site. Cys-226 (proton acceptor) is an active-site residue. A substrate-binding site is contributed by 227–228 (GT).

The protein belongs to the diaminopimelate epimerase family. Homodimer.

It localises to the cytoplasm. It carries out the reaction (2S,6S)-2,6-diaminopimelate = meso-2,6-diaminopimelate. Its pathway is amino-acid biosynthesis; L-lysine biosynthesis via DAP pathway; DL-2,6-diaminopimelate from LL-2,6-diaminopimelate: step 1/1. Catalyzes the stereoinversion of LL-2,6-diaminopimelate (L,L-DAP) to meso-diaminopimelate (meso-DAP), a precursor of L-lysine and an essential component of the bacterial peptidoglycan. This Ralstonia pickettii (strain 12J) protein is Diaminopimelate epimerase.